The following is a 314-amino-acid chain: ATP synthase gamma chain (314 aa).

It belongs to the ATPase gamma chain family. In terms of assembly, F-type ATPases have 2 components, CF(1) - the catalytic core - and CF(0) - the membrane proton channel. CF(1) has five subunits: alpha(3), beta(3), gamma(1), delta(1), epsilon(1). CF(0) has three main subunits: a, b and c.

The protein resides in the cellular thylakoid membrane. Functionally, produces ATP from ADP in the presence of a proton gradient across the membrane. The gamma chain is believed to be important in regulating ATPase activity and the flow of protons through the CF(0) complex. The protein is ATP synthase gamma chain of Synechococcus sp. (strain JA-2-3B'a(2-13)) (Cyanobacteria bacterium Yellowstone B-Prime).